We begin with the raw amino-acid sequence, 32 residues long: Photosystem II reaction center protein Z (32 aa).

The chain crosses the membrane as a helical span at residues 9–29 (IIFSGSLIWVFLLIIVGFLNY).

It belongs to the PsbZ family. In terms of assembly, PSII is composed of 1 copy each of membrane proteins PsbA, PsbB, PsbC, PsbD, PsbE, PsbF, PsbH, PsbI, PsbJ, PsbK, PsbL, PsbM, PsbT, PsbY, PsbZ, Psb30/Ycf12, at least 3 peripheral proteins of the oxygen-evolving complex and a large number of cofactors. It forms dimeric complexes.

The protein localises to the plastid. The protein resides in the chloroplast thylakoid membrane. Its function is as follows. May control the interaction of photosystem II (PSII) cores with the light-harvesting antenna, regulates electron flow through the 2 photosystem reaction centers. PSII is a light-driven water plastoquinone oxidoreductase, using light energy to abstract electrons from H(2)O, generating a proton gradient subsequently used for ATP formation. This chain is Photosystem II reaction center protein Z, found in Euglena myxocylindracea.